Here is a 183-residue protein sequence, read N- to C-terminus: Large ribosomal subunit protein uL6 (183 aa).

It belongs to the universal ribosomal protein uL6 family. In terms of assembly, part of the 50S ribosomal subunit.

Functionally, this protein binds to the 23S rRNA, and is important in its secondary structure. It is located near the subunit interface in the base of the L7/L12 stalk, and near the tRNA binding site of the peptidyltransferase center. The chain is Large ribosomal subunit protein uL6 from Moorella thermoacetica (strain ATCC 39073 / JCM 9320).